The following is a 484-amino-acid chain: Cobyric acid synthase (484 aa).

The GATase cobBQ-type domain maps to V248 to S435. Catalysis depends on C329, which acts as the Nucleophile. H427 is an active-site residue.

Belongs to the CobB/CobQ family. CobQ subfamily.

The protein operates within cofactor biosynthesis; adenosylcobalamin biosynthesis. In terms of biological role, catalyzes amidations at positions B, D, E, and G on adenosylcobyrinic A,C-diamide. NH(2) groups are provided by glutamine, and one molecule of ATP is hydrogenolyzed for each amidation. The sequence is that of Cobyric acid synthase from Pseudomonas putida (strain GB-1).